Here is a 2426-residue protein sequence, read N- to C-terminus: Protein SON (2426 aa).

Position 2 is an N-acetylalanine (alanine 2). At lysine 16 the chain carries N6-acetyllysine. The segment covering 24 to 42 has biased composition (polar residues); the sequence is LSSGRNEGQLNGETNTPIE. A disordered region spans residues 24–56; it reads LSSGRNEGQLNGETNTPIEGNQAGDAAASARSL. Lysine 64 is covalently cross-linked (Glycyl lysine isopeptide (Lys-Gly) (interchain with G-Cter in SUMO2)). The segment covering 77–88 has biased composition (basic and acidic residues); it reads LRYKPDLKEGSR. Residues 77-155 are disordered; it reads LRYKPDLKEG…GNIDLESDSF (79 aa). A Phosphoserine modification is found at serine 94. The segment covering 106 to 130 has biased composition (basic residues); sequence KKSKKHKKHKNKKKKKKKEKEKKYK. A compositionally biased stretch (basic and acidic residues) spans 131–146; sequence RQPEESESKTKSHDDG. 5 positions are modified to phosphoserine: serine 142, serine 152, serine 154, serine 160, and serine 283. Lysine 288 is subject to N6-acetyllysine. The tract at residues 305–328 is disordered; it reads TLVVSSETPTEVYPEPSTSTTMDF. Residue threonine 400 is modified to Phosphothreonine. A disordered region spans residues 406–442; sequence PGPSATPVPELPGPLSTPVPELPGPPATAVPELPGPS. Residues 409-442 are compositionally biased toward pro residues; the sequence is SATPVPELPGPLSTPVPELPGPPATAVPELPGPS. The segment at 726–895 is 17 X 10 AA tandem repeats of L-A-[ST]-[NSG]-[TS]-MDSQM; the sequence is LASNTMDSQM…LASGTMDAQM (170 aa). The tract at residues 912-988 is 11 X 7 AA tandem repeats of [DR]-P-Y-R-[LI][AG][QHP]; the sequence is DPYRLAQDPY…IAPRPYRLAP (77 aa). The residue at position 950 (arginine 950) is an Omega-N-methylarginine. Threonine 959 carries the post-translational modification Phosphothreonine. Serine 998 bears the Phosphoserine mark. 14 tandem repeats follow at residues 1006–1011, 1014–1019, 1021–1026, 1030–1035, 1038–1043, 1046–1051, 1055–1060, 1063–1068, 1071–1076, 1080–1085, 1089–1094, 1100–1105, 1111–1116, and 1121–1126. The 14 X 6 AA repeats of [ED]-R-S-M-M-S stretch occupies residues 1006 to 1126; sequence ERSMMSSYER…SYTADRSMMS (121 aa). Arginine 1007 carries the post-translational modification Asymmetric dimethylarginine. Residue arginine 1022 is modified to Asymmetric dimethylarginine. A phosphoserine mark is found at serine 1035 and serine 1043. Residues serine 1060 and serine 1068 each carry the phosphoserine modification. Serine 1082 bears the Phosphoserine mark. Residues 1144 to 1236 form a disordered region; sequence YMVPPLPPEE…PTDYSVSASD (93 aa). The 3 X 11 AA tandem repats of P-P-L-P-P-E-E-P-P-[TME]-[MTG] stretch occupies residues 1147-1179; the sequence is PPLPPEEPPTMPPLPPEEPPMTPPLPPEEPPEG. The span at 1147–1180 shows a compositional bias: pro residues; sequence PPLPPEEPPTMPPLPPEEPPMTPPLPPEEPPEGP. The span at 1186-1196 shows a compositional bias: polar residues; that stretch reads QSALTAENTWP. Residues 1198-1224 are compositionally biased toward low complexity; the sequence is EVPSSPSEESVSQPEPPVSQSEISEPS. A 4 X 8 AA tandem repeats of V-L-E-SS-[AVT]-VT region spans residues 1359–1390; sequence VLESSAVTVLESSTVTVLESSTVTVLEPSVVT. A phosphoserine mark is found at serine 1556 and serine 1651. Residues 1645–1722 form a disordered region; it reads TSPSGGSEAD…KETLPDSGFS (78 aa). Residues 1677 to 1689 show a composition bias toward basic and acidic residues; that stretch reads KDTEEPLPVKESD. Serine 1697, serine 1701, serine 1747, serine 1759, serine 1766, serine 1769, serine 1782, and serine 1783 each carry phosphoserine. Positions 1754–2054 are disordered; it reads GPLLASDVGR…RSPKRLTDLD (301 aa). Composition is skewed to basic and acidic residues over residues 1790 to 1801, 1809 to 1822, and 1830 to 1845; these read YEIFVKVKDTHE, RDKG…DSSL, and KSSE…ESRS. Composition is skewed to basic residues over residues 1846–1909 and 1917–1948; these read RARK…RKRS and TVRA…RRRS. 9 tandem repeats follow at residues 1925–1931, 1934–1952, 1953–1959, 1960–1966, 1967–1973, 1974–1980, 1981–1987, 1988–1994, and 1995–2013. Positions 1925–1994 are 7 X 7 AA repeats of P-S-R-R-S-R-[TS]; the sequence is PSRRSRSHTP…SRTPSRRSRT (70 aa). The interval 1934–2013 is 2 X 19 AA repeats of P-S-R-R-R-R-S-R-S-V-V-R-R-R-S-F-S-I-S; sequence PSRRRRSRSV…VVRRRSFSIS (80 aa). Phosphoserine is present on residues serine 1948, serine 1950, and serine 1952. Basic residues predominate over residues 1955–2009; it reads RRSRTPSRRSRTPSRRSRTPSRRSRTPSRRSRTPSRRSRTPSRRRRSRSVVRRRS. A phosphoserine mark is found at serine 2009, serine 2011, serine 2013, serine 2029, and serine 2031. Residues 2013-2039 are 3 X tandem repeats of [ST]-P-[VLI]-R-[RL]-[RK]-[RF]-S-R; it reads SPVRLRRSRTPLRRRFSRSPIRRKRSR. The segment covering 2016–2038 has biased composition (basic residues); that stretch reads RLRRSRTPLRRRFSRSPIRRKRS. Residues 2039–2054 show a composition bias toward basic and acidic residues; sequence RSSERGRSPKRLTDLD. Lysine 2055 carries the post-translational modification N6-acetyllysine; alternate. Lysine 2055 is covalently cross-linked (Glycyl lysine isopeptide (Lys-Gly) (interchain with G-Cter in SUMO2); alternate). A Glycyl lysine isopeptide (Lys-Gly) (interchain with G-Cter in SUMO2) cross-link involves residue lysine 2092. Position 2129 is a phosphoserine (serine 2129). Lysine 2149 participates in a covalent cross-link: Glycyl lysine isopeptide (Lys-Gly) (interchain with G-Cter in SUMO2). The residue at position 2163 (threonine 2163) is a Phosphothreonine. Positions 2200-2220 are disordered; the sequence is KNGEENKDDDNVFSSNLPSEP. Phosphoserine is present on serine 2238. The G-patch domain occupies 2305 to 2351; it reads TGGMGAVLMRKMGWREGEGLGKNKEGNKEPILVDFKTDRKGLVAVGE. In terms of domain architecture, DRBM spans 2371-2426; the sequence is HPVSALMEICNKRRWQPPEFLLVHDSGPDHRKHFLFRVLRNGALTRPNCMFFLNRY.

As to quaternary structure, interacts with SRSF2. Associates with the spliceosome. Interacts with the AML1-MTG8 (AML1-ETO) fusion protein, possibly leading to trigger signals inhibiting leukemogenesis. Interacts with USH1G. Widely expressed, with the higher expression seen in leukocyte and heart.

It localises to the nucleus speckle. In terms of biological role, RNA-binding protein that acts as a mRNA splicing cofactor by promoting efficient splicing of transcripts that possess weak splice sites. Specifically promotes splicing of many cell-cycle and DNA-repair transcripts that possess weak splice sites, such as TUBG1, KATNB1, TUBGCP2, AURKB, PCNT, AKT1, RAD23A, and FANCG. Probably acts by facilitating the interaction between Serine/arginine-rich proteins such as SRSF2 and the RNA polymerase II. Also binds to DNA; binds to the consensus DNA sequence: 5'-GA[GT]AN[CG][AG]CC-3'. May indirectly repress hepatitis B virus (HBV) core promoter activity and transcription of HBV genes and production of HBV virions. Essential for correct RNA splicing of multiple genes critical for brain development, neuronal migration and metabolism, including TUBG1, FLNA, PNKP, WDR62, PSMD3, PCK2, PFKL, IDH2, and ACY1. This is Protein SON (SON) from Homo sapiens (Human).